Here is a 376-residue protein sequence, read N- to C-terminus: Cytochrome c oxidase subunit 2, mitochondrial (376 aa).

A helical membrane pass occupies residues 164 to 184; sequence IFFFLVQILVFVLWVLSRALW. Topologically, residues 185-204 are mitochondrial matrix; that stretch reads CFRSKISPIPQRIVHGTTIE. A helical transmembrane segment spans residues 205 to 225; the sequence is ILWTILPSIILMFIAIPSFTL. Residues 226-376 are Mitochondrial intermembrane-facing; sequence LYSMDDVVVD…YGSWVSNQIQ (151 aa). Positions 309, 344, 346, 348, 352, and 355 each coordinate Cu cation. Glu-346 contacts Mg(2+).

It belongs to the cytochrome c oxidase subunit 2 family. As to quaternary structure, component of the cytochrome c oxidase (complex IV, CIV), a multisubunit enzyme composed of a catalytic core of 3 subunits and several supernumerary subunits. The complex exists as a monomer or a dimer and forms supercomplexes (SCs) in the inner mitochondrial membrane with ubiquinol-cytochrome c oxidoreductase (cytochrome b-c1 complex, complex III, CIII). Cu cation serves as cofactor.

The protein localises to the mitochondrion inner membrane. It catalyses the reaction 4 Fe(II)-[cytochrome c] + O2 + 8 H(+)(in) = 4 Fe(III)-[cytochrome c] + 2 H2O + 4 H(+)(out). Functionally, component of the cytochrome c oxidase, the last enzyme in the mitochondrial electron transport chain which drives oxidative phosphorylation. The respiratory chain contains 3 multisubunit complexes succinate dehydrogenase (complex II, CII), ubiquinol-cytochrome c oxidoreductase (cytochrome b-c1 complex, complex III, CIII) and cytochrome c oxidase (complex IV, CIV), that cooperate to transfer electrons derived from NADH and succinate to molecular oxygen, creating an electrochemical gradient over the inner membrane that drives transmembrane transport and the ATP synthase. Cytochrome c oxidase is the component of the respiratory chain that catalyzes the reduction of oxygen to water. Electrons originating from reduced cytochrome c in the intermembrane space (IMS) are transferred via the dinuclear copper A center (CU(A)) of subunit 2 and heme A of subunit 1 to the active site in subunit 1, a binuclear center (BNC) formed by heme A3 and copper B (CU(B)). The BNC reduces molecular oxygen to 2 water molecules using 4 electrons from cytochrome c in the IMS and 4 protons from the mitochondrial matrix. This chain is Cytochrome c oxidase subunit 2, mitochondrial (COX2), found in Vigna unguiculata (Cowpea).